Consider the following 437-residue polypeptide: Chromosomal replication initiator protein DnaA (437 aa).

Residues 1–67 (MKNKIIASLK…KVVKDILGKD (67 aa)) form a domain I, interacts with DnaA modulators region. Residues 67–97 (DATYEITFKEIPYETKVESGPLIKKRPLLIT) form a domain II region. Residues 98–313 (PLNPKYTFEN…GAILRLIAYR (216 aa)) are domain III, AAA+ region. ATP contacts are provided by G141, G143, K144, and T145. The segment at 314-437 (NLYGTLNLSI…SKGFAQGESM (124 aa)) is domain IV, binds dsDNA.

Belongs to the DnaA family. Oligomerizes as a right-handed, spiral filament on DNA at oriC.

It localises to the cytoplasm. In terms of biological role, plays an essential role in the initiation and regulation of chromosomal replication. ATP-DnaA binds to the origin of replication (oriC) to initiate formation of the DNA replication initiation complex once per cell cycle. Binds the DnaA box (a 9 base pair repeat at the origin) and separates the double-stranded (ds)DNA. Forms a right-handed helical filament on oriC DNA; dsDNA binds to the exterior of the filament while single-stranded (ss)DNA is stabiized in the filament's interior. The ATP-DnaA-oriC complex binds and stabilizes one strand of the AT-rich DNA unwinding element (DUE), permitting loading of DNA polymerase. After initiation quickly degrades to an ADP-DnaA complex that is not apt for DNA replication. Binds acidic phospholipids. The chain is Chromosomal replication initiator protein DnaA from Thermosipho melanesiensis (strain DSM 12029 / CIP 104789 / BI429).